A 274-amino-acid polypeptide reads, in one-letter code: Large ribosomal subunit protein uL2cy (274 aa).

Disordered regions lie at residues M1–S20 and N224–K274.

It belongs to the universal ribosomal protein uL2 family. As to quaternary structure, part of the 50S ribosomal subunit.

The protein localises to the plastid. The protein resides in the chloroplast. The protein is Large ribosomal subunit protein uL2cy (rpl2-B) of Populus alba (White poplar).